Consider the following 1181-residue polypeptide: Putative type II restriction enzyme and methyltransferase RM.MjaORFECS2P (1181 aa).

In the C-terminal section; belongs to the N(4)/N(6)-methyltransferase family.

It catalyses the reaction Endonucleolytic cleavage of DNA to give specific double-stranded fragments with terminal 5'-phosphates.. The catalysed reaction is a 2'-deoxyadenosine in DNA + S-adenosyl-L-methionine = an N(6)-methyl-2'-deoxyadenosine in DNA + S-adenosyl-L-homocysteine + H(+). Probably a G subtype restriction enzyme that recognizes an undetermined sequence and cleaves at an undetermined site. Probably also acts as an alpha subtype methylase, presumably on the same sequence. In Methanocaldococcus jannaschii (strain ATCC 43067 / DSM 2661 / JAL-1 / JCM 10045 / NBRC 100440) (Methanococcus jannaschii), this protein is Putative type II restriction enzyme and methyltransferase RM.MjaORFECS2P.